The chain runs to 151 residues: Sigma factor binding protein 1, chloroplastic (151 aa).

Residues 1–13 (MESSSSTFLTTTS) are compositionally biased toward low complexity. 2 disordered regions span residues 1–41 (MESS…KPIK) and 66–93 (TGQDAVDLQPEPIYSPSSDDHNLSPPAE). The N-terminal 54 residues, 1–54 (MESSSSTFLTTTSLDKKKPSPVSRKSPKQKKKTTSTNKPIKVRYISNPMRVQTC), are a transit peptide targeting the chloroplast. The short motif at 16-32 (KKKPSPVSRKSPKQKKK) is the Bipartite nuclear localization signal element. The VQ signature appears at 58–67 (FRELVQELTG).

Interacts with the sigma factor SIGA in chloroplast. Interacts with WRKY25 and WRKY33 in the nucleus. Expressed in leaves and roots, but not in flowers.

The protein resides in the plastid. It localises to the chloroplast. Its subcellular location is the nucleus. Contributes to plant defense. May regulate chloroplast metabolism upon infection with pathogens such as Pseudomonas syringae. Functions as activator of WRKY33 in plant defense against necrotrophic pathogens by stimulating the DNA-binding activity of WRKY33. This is Sigma factor binding protein 1, chloroplastic (SIB1) from Arabidopsis thaliana (Mouse-ear cress).